Consider the following 67-residue polypeptide: Large ribosomal subunit protein bL31 (67 aa).

Cys16, Cys18, Cys36, and Cys39 together coordinate Zn(2+).

This sequence belongs to the bacterial ribosomal protein bL31 family. Type A subfamily. In terms of assembly, part of the 50S ribosomal subunit. Requires Zn(2+) as cofactor.

In terms of biological role, binds the 23S rRNA. In Aliarcobacter butzleri (strain RM4018) (Arcobacter butzleri), this protein is Large ribosomal subunit protein bL31.